We begin with the raw amino-acid sequence, 223 residues long: Lipoprotein-releasing system ATP-binding protein LolD (223 aa).

Residues 2-223 form the ABC transporter domain; that stretch reads IQVRNLKKTF…LRDGEIVTCA (222 aa). 38–45 is an ATP binding site; the sequence is GVSGAGKT.

It belongs to the ABC transporter superfamily. Lipoprotein translocase (TC 3.A.1.125) family. As to quaternary structure, the complex is composed of two ATP-binding proteins (LolD) and two transmembrane proteins (LolC and LolE).

It localises to the cell inner membrane. In terms of biological role, part of the ABC transporter complex LolCDE involved in the translocation of mature outer membrane-directed lipoproteins, from the inner membrane to the periplasmic chaperone, LolA. Responsible for the formation of the LolA-lipoprotein complex in an ATP-dependent manner. This Syntrophus aciditrophicus (strain SB) protein is Lipoprotein-releasing system ATP-binding protein LolD.